Reading from the N-terminus, the 889-residue chain is DNA mismatch repair protein MutS (889 aa).

A compositionally biased stretch (low complexity) spans 1–17 (MPKTNSSAASTNANPSS). The interval 1 to 20 (MPKTNSSAASTNANPSSLQQ) is disordered. Position 640–647 (640–647 (GPNMGGKS)) interacts with ATP.

This sequence belongs to the DNA mismatch repair MutS family.

Its function is as follows. This protein is involved in the repair of mismatches in DNA. It is possible that it carries out the mismatch recognition step. This protein has a weak ATPase activity. This Pseudoalteromonas atlantica (strain T6c / ATCC BAA-1087) protein is DNA mismatch repair protein MutS.